The sequence spans 333 residues: Trimethylamine N-oxide-binding protein (333 aa).

An N-terminal signal peptide occupies residues 1 to 42 (MRLFREIAANDPGPTGRMKNMKTFTTALATGVLALCPLAALA). 5 residues coordinate trimethylamine N-oxide: Trp-55, Trp-102, Glu-131, Trp-177, and Trp-222. Ca(2+)-binding residues include Pro-249, Val-251, Asn-254, Ala-257, and Asp-260.

In terms of assembly, the complex is probably composed of two ATP-binding proteins (TmoW), two transmembrane proteins (TmoV) and a solute-binding protein (TmoX). Monomer in solution, but forms homodimers in crystals.

The protein localises to the periplasm. Its activity is regulated as follows. Binds a Ca(2+) ion, which has little effect on either the binding affinity or the secondary structure, but plays an important role in maintaining the stability of TmoX. It may modulate the protein stability in response to biological needs and environmental changes. Thermostability is dramatically decreased when Ca(2+) is removed by EDTA. Part of the ABC transporter complex TmoXWV involved in trimethylamine N-oxide (TMAO) import. Is specific for TMAO and essential for TMAO metabolism. Binds TMAO with high affinity. In vitro, also presents a high binding affinity for choline, however this transporter seems specific for TMAO and the choline-binding affinity presented by recombinant TmoX may not make physiological sense. This is Trimethylamine N-oxide-binding protein from Ruegeria pomeroyi (strain ATCC 700808 / DSM 15171 / DSS-3) (Silicibacter pomeroyi).